The sequence spans 161 residues: RNA pyrophosphohydrolase (161 aa).

A Nudix hydrolase domain is found at P12–K154. Positions G46–G67 match the Nudix box motif.

This sequence belongs to the Nudix hydrolase family. RppH subfamily. A divalent metal cation is required as a cofactor.

Its function is as follows. Accelerates the degradation of transcripts by removing pyrophosphate from the 5'-end of triphosphorylated RNA, leading to a more labile monophosphorylated state that can stimulate subsequent ribonuclease cleavage. The sequence is that of RNA pyrophosphohydrolase from Rickettsia peacockii (strain Rustic).